Consider the following 414-residue polypeptide: 26S proteasome regulatory subunit 8 homolog (414 aa).

An ATP-binding site is contributed by 197 to 204; sequence GPPGTGKT.

Belongs to the AAA ATPase family.

The protein resides in the cytoplasm. The protein localises to the nucleus. Its function is as follows. The 26S proteasome is involved in the ATP-dependent degradation of ubiquitinated proteins. The regulatory (or ATPase) complex confers ATP dependency and substrate specificity to the 26S complex. The sequence is that of 26S proteasome regulatory subunit 8 homolog from Naegleria fowleri (Brain eating amoeba).